Consider the following 60-residue polypeptide: Large ribosomal subunit protein bL32 (60 aa).

This sequence belongs to the bacterial ribosomal protein bL32 family.

This Pseudothermotoga lettingae (strain ATCC BAA-301 / DSM 14385 / NBRC 107922 / TMO) (Thermotoga lettingae) protein is Large ribosomal subunit protein bL32.